Consider the following 249-residue polypeptide: DNA polymerase sliding clamp (249 aa).

Belongs to the PCNA family. In terms of assembly, homotrimer. The subunits circularize to form a toroid; DNA passes through its center. Replication factor C (RFC) is required to load the toroid on the DNA.

Its function is as follows. Sliding clamp subunit that acts as a moving platform for DNA processing. Responsible for tethering the catalytic subunit of DNA polymerase and other proteins to DNA during high-speed replication. In Nanoarchaeum equitans (strain Kin4-M), this protein is DNA polymerase sliding clamp.